The following is a 23-amino-acid chain: GVIELTKMIVQEMGKNALTSYSL.

Contains 7 disulfide bonds. In terms of tissue distribution, expressed by the venom gland.

It is found in the secreted. The sequence is that of Basic phospholipase A2 homolog from Trimeresurus stejnegeri (Chinese green tree viper).